A 38-amino-acid polypeptide reads, in one-letter code: Toxin BmK NSPK (38 aa).

Disulfide bonds link Cys-7/Cys-27, Cys-13/Cys-32, and Cys-17/Cys-34.

Expressed by the venom gland.

It localises to the secreted. Its function is as follows. Blocks voltage-gated potassium (Kv) channel and augments neurite extension via NGF/TrkA signaling pathway. The polypeptide is Toxin BmK NSPK (Olivierus martensii (Manchurian scorpion)).